Reading from the N-terminus, the 190-residue chain is dTTP/UTP pyrophosphatase (190 aa).

Residue aspartate 68 is the Proton acceptor of the active site.

The protein belongs to the Maf family. YhdE subfamily. It depends on a divalent metal cation as a cofactor.

It localises to the cytoplasm. The enzyme catalyses dTTP + H2O = dTMP + diphosphate + H(+). The catalysed reaction is UTP + H2O = UMP + diphosphate + H(+). Functionally, nucleoside triphosphate pyrophosphatase that hydrolyzes dTTP and UTP. May have a dual role in cell division arrest and in preventing the incorporation of modified nucleotides into cellular nucleic acids. This chain is dTTP/UTP pyrophosphatase, found in Pyrococcus furiosus (strain ATCC 43587 / DSM 3638 / JCM 8422 / Vc1).